We begin with the raw amino-acid sequence, 114 residues long: Iron-sulfur cluster insertion protein ErpA (114 aa).

Iron-sulfur cluster-binding residues include C42, C106, and C108.

It belongs to the HesB/IscA family. Homodimer. Requires iron-sulfur cluster as cofactor.

Required for insertion of 4Fe-4S clusters for at least IspG. In Cronobacter sakazakii (strain ATCC BAA-894) (Enterobacter sakazakii), this protein is Iron-sulfur cluster insertion protein ErpA.